The chain runs to 146 residues: Cyanate hydratase (146 aa).

Active-site residues include Arg-87, Glu-90, and Ser-113.

The protein belongs to the cyanase family.

The enzyme catalyses cyanate + hydrogencarbonate + 3 H(+) = NH4(+) + 2 CO2. Its function is as follows. Catalyzes the reaction of cyanate with bicarbonate to produce ammonia and carbon dioxide. In Teredinibacter turnerae (strain ATCC 39867 / T7901), this protein is Cyanate hydratase.